The following is a 483-amino-acid chain: Alginate biosynthesis protein AlgA (483 aa).

The protein belongs to the mannose-6-phosphate isomerase type 2 family. As to quaternary structure, monomer. Requires Co(2+) as cofactor.

It carries out the reaction D-mannose 6-phosphate = D-fructose 6-phosphate. The catalysed reaction is alpha-D-mannose 1-phosphate + GTP + H(+) = GDP-alpha-D-mannose + diphosphate. It functions in the pathway nucleotide-sugar biosynthesis; GDP-alpha-D-mannose biosynthesis; GDP-alpha-D-mannose from alpha-D-mannose 1-phosphate (GTP route): step 1/1. The protein operates within nucleotide-sugar biosynthesis; GDP-alpha-D-mannose biosynthesis; alpha-D-mannose 1-phosphate from D-fructose 6-phosphate: step 1/2. Functionally, produces a precursor for alginate polymerization. The alginate layer provides a protective barrier against host immune defenses and antibiotics. The protein is Alginate biosynthesis protein AlgA (algA) of Pseudomonas fluorescens.